The chain runs to 245 residues: Bis(5'-nucleosyl)-tetraphosphatase PrpE [asymmetrical] (245 aa).

The protein belongs to the PrpE family. Requires Ni(2+) as cofactor.

The catalysed reaction is P(1),P(4)-bis(5'-guanosyl) tetraphosphate + H2O = GMP + GTP + 2 H(+). In terms of biological role, asymmetrically hydrolyzes Ap4p to yield AMP and ATP. This Geobacillus thermodenitrificans (strain NG80-2) protein is Bis(5'-nucleosyl)-tetraphosphatase PrpE [asymmetrical].